Consider the following 95-residue polypeptide: Integration host factor subunit beta (95 aa).

This sequence belongs to the bacterial histone-like protein family. Heterodimer of an alpha and a beta chain.

This protein is one of the two subunits of integration host factor, a specific DNA-binding protein that functions in genetic recombination as well as in transcriptional and translational control. The protein is Integration host factor subunit beta of Klebsiella pneumoniae subsp. pneumoniae (strain ATCC 700721 / MGH 78578).